We begin with the raw amino-acid sequence, 384 residues long: Alanine racemase (384 aa).

Lysine 39 (proton acceptor; specific for D-alanine) is an active-site residue. Lysine 39 carries the post-translational modification N6-(pyridoxal phosphate)lysine. A substrate-binding site is contributed by arginine 136. The active-site Proton acceptor; specific for L-alanine is the tyrosine 265. Methionine 312 contributes to the substrate binding site.

Belongs to the alanine racemase family. Pyridoxal 5'-phosphate is required as a cofactor.

It catalyses the reaction L-alanine = D-alanine. It functions in the pathway amino-acid biosynthesis; D-alanine biosynthesis; D-alanine from L-alanine: step 1/1. Catalyzes the interconversion of L-alanine and D-alanine. May also act on other amino acids. In Geobacillus kaustophilus (strain HTA426), this protein is Alanine racemase (alr).